The primary structure comprises 119 residues: Immunoglobulin heavy variable 3-73 (119 aa).

The first 19 residues, 1–19 (MEFGLSWVFLVAILKGVQC), serve as a signal peptide directing secretion. A framework-1 region spans residues 20-44 (EVQLVESGGGLVQPGGSLKLSCAAS). The Ig-like domain occupies 20–119 (EVQLVESGGG…EDTAVYYCTR (100 aa)). A disulfide bond links Cys-41 and Cys-117. A complementarity-determining-1 region spans residues 45 to 52 (GFTFSGSA). The interval 53 to 69 (MHWVRQASGKGLEWVGR) is framework-2. The complementarity-determining-2 stretch occupies residues 70–79 (IRSKANSYAT). A framework-3 region spans residues 80–117 (AYAASVKGRFTISRDDSKNTAYLQMNSLKTEDTAVYYC). Residues 118-119 (TR) form a complementarity-determining-3 region.

Immunoglobulins are composed of two identical heavy chains and two identical light chains; disulfide-linked.

The protein localises to the secreted. It is found in the cell membrane. Functionally, v region of the variable domain of immunoglobulin heavy chains that participates in the antigen recognition. Immunoglobulins, also known as antibodies, are membrane-bound or secreted glycoproteins produced by B lymphocytes. In the recognition phase of humoral immunity, the membrane-bound immunoglobulins serve as receptors which, upon binding of a specific antigen, trigger the clonal expansion and differentiation of B lymphocytes into immunoglobulins-secreting plasma cells. Secreted immunoglobulins mediate the effector phase of humoral immunity, which results in the elimination of bound antigens. The antigen binding site is formed by the variable domain of one heavy chain, together with that of its associated light chain. Thus, each immunoglobulin has two antigen binding sites with remarkable affinity for a particular antigen. The variable domains are assembled by a process called V-(D)-J rearrangement and can then be subjected to somatic hypermutations which, after exposure to antigen and selection, allow affinity maturation for a particular antigen. The sequence is that of Immunoglobulin heavy variable 3-73 from Homo sapiens (Human).